Reading from the N-terminus, the 413-residue chain is MSIQTTADSRMIQSIFQVVLVSLLVLGSVRWILDELKSKESRISKLYGFRQKEAVFVTKEDQLDESCNVFEGQWVWDNVSYPLYTEKSCPYLVKQTTCQRNGRPDSYYQNWRWKPSSCDLPRFNALKLLDVLRNKRLMFIGDSVQRSTFESMVCMVQSVIPEKKKSFHRIPPMKIFKAEEYNASIEYYWAPFIVESISDHATNHTVHKRLVKLDAIEKHSKSWEGVDVLVFESYVWWMHQPKINATYGDTSEVREYNVTTAYKMALETWAKWFKTKINSEKQKVFFTSMSPTHLWSWEWNPGSDGTCYDELYPIDKRSYWGTGSNQEIMKIVGDVLSRVGENVTFLNITQLSEYRKDGHTTVYGERRGKLLTKEQRADPKNYGDCIHWCLPGVPDTWNEILYAYLLRSHRNFF.

A helical; Signal-anchor for type II membrane protein membrane pass occupies residues 12 to 34 (IQSIFQVVLVSLLVLGSVRWILD). The GDS motif signature appears at 141–143 (GDS). A DCXHWCLPGXXDXWN motif motif is present at residues 384-398 (DCIHWCLPGVPDTWN).

It belongs to the PC-esterase family. TBL subfamily.

It localises to the membrane. Functionally, may act as a bridging protein that binds pectin and other cell wall polysaccharides. Probably involved in maintaining esterification of pectins. May be involved in the specific O-acetylation of cell wall polymers. The sequence is that of Protein trichome birefringence-like 31 (TBL31) from Arabidopsis thaliana (Mouse-ear cress).